The sequence spans 244 residues: Exosome complex component Rrp41 (244 aa).

This sequence belongs to the RNase PH family. Rrp41 subfamily. As to quaternary structure, component of the archaeal exosome complex. Forms a hexameric ring-like arrangement composed of 3 Rrp41-Rrp42 heterodimers. The hexameric ring associates with a trimer of Rrp4 and/or Csl4 subunits.

It is found in the cytoplasm. Catalytic component of the exosome, which is a complex involved in RNA degradation. Has 3'-&gt;5' exoribonuclease activity. Can also synthesize heteromeric RNA-tails. The sequence is that of Exosome complex component Rrp41 from Nitrosopumilus maritimus (strain SCM1).